The primary structure comprises 333 residues: Tetraacyldisaccharide 4'-kinase (333 aa).

60-67 serves as a coordination point for ATP; it reads TVGGTGKT.

This sequence belongs to the LpxK family.

The enzyme catalyses a lipid A disaccharide + ATP = a lipid IVA + ADP + H(+). It participates in glycolipid biosynthesis; lipid IV(A) biosynthesis; lipid IV(A) from (3R)-3-hydroxytetradecanoyl-[acyl-carrier-protein] and UDP-N-acetyl-alpha-D-glucosamine: step 6/6. Transfers the gamma-phosphate of ATP to the 4'-position of a tetraacyldisaccharide 1-phosphate intermediate (termed DS-1-P) to form tetraacyldisaccharide 1,4'-bis-phosphate (lipid IVA). This Ectopseudomonas mendocina (strain ymp) (Pseudomonas mendocina) protein is Tetraacyldisaccharide 4'-kinase.